The sequence spans 743 residues: tRNA(Met) cytidine acetyltransferase TmcA (743 aa).

ATP is bound by residues Q216, 241 to 250, and R390; that span reads GRGKSASIGL. One can recognise an N-acetyltransferase domain in the interval 420–604; that stretch reads LKIEDVSQEE…YSVIVIRALS (185 aa). Acetyl-CoA is bound by residues 531 to 533 and 538 to 544; these read IAV and QGKGIGS.

This sequence belongs to the RNA cytidine acetyltransferase family. TmcA subfamily.

Its subcellular location is the cytoplasm. It carries out the reaction cytidine(34) in elongator tRNA(Met) + acetyl-CoA + ATP + H2O = N(4)-acetylcytidine(34) in elongator tRNA(Met) + ADP + phosphate + CoA + H(+). Catalyzes the formation of N(4)-acetylcytidine (ac(4)C) at the wobble position of tRNA(Met), by using acetyl-CoA as an acetyl donor and ATP (or GTP). The sequence is that of tRNA(Met) cytidine acetyltransferase TmcA from Saccharolobus islandicus (strain Y.G.57.14 / Yellowstone #1) (Sulfolobus islandicus).